We begin with the raw amino-acid sequence, 100 residues long: UPF0213 protein YhbQ (100 aa).

Positions 2–77 (TPWFLYLIRT…KQLTKRQKER (76 aa)) constitute a GIY-YIG domain.

The protein belongs to the UPF0213 family.

This is UPF0213 protein YhbQ from Escherichia coli O157:H7.